Here is a 72-residue protein sequence, read N- to C-terminus: Small ribosomal subunit protein bS18c (72 aa).

The protein belongs to the bacterial ribosomal protein bS18 family. In terms of assembly, part of the 30S ribosomal subunit.

The protein resides in the plastid. The protein localises to the chloroplast. The polypeptide is Small ribosomal subunit protein bS18c (Thalassiosira pseudonana (Marine diatom)).